Here is a 737-residue protein sequence, read N- to C-terminus: Amino-acid acetyltransferase, mitochondrial (737 aa).

The N-terminal 47 residues, 1-47, are a transit peptide targeting the mitochondrion; sequence MSRSTVLGWCTQSCRLLQKHDHSFSFPTFNGSPPLKKRRFCDSAAPA. Residues 43–78 are disordered; it reads SAAPAAPRPSIHRPSEYIPHSKSGGEAPQDLGHKAR. The N-acetyltransferase domain maps to 558–727; sequence GEPALTLDDP…YEGVCRAIEP (170 aa).

Belongs to the acetyltransferase family.

It is found in the mitochondrion. The enzyme catalyses L-glutamate + acetyl-CoA = N-acetyl-L-glutamate + CoA + H(+). The protein operates within amino-acid biosynthesis; L-arginine biosynthesis; N(2)-acetyl-L-ornithine from L-glutamate: step 1/4. Its function is as follows. N-acetylglutamate synthase involved in arginine biosynthesis. In Coccidioides immitis (strain RS) (Valley fever fungus), this protein is Amino-acid acetyltransferase, mitochondrial (ARG2).